Here is a 177-residue protein sequence, read N- to C-terminus: dCTP deaminase, dUMP-forming (177 aa).

DCTP contacts are provided by residues 98–103, asparagine 110, 115–118, 123–125, glutamine 144, 157–160, and glutamine 164; these read RSSVGR, DPGF, TLE, and YQGK. Residue glutamate 125 is the Proton donor/acceptor of the active site.

Belongs to the dCTP deaminase family. As to quaternary structure, homotrimer. The cofactor is Mg(2+).

The catalysed reaction is dCTP + 2 H2O = dUMP + NH4(+) + diphosphate. It functions in the pathway pyrimidine metabolism; dUMP biosynthesis; dUMP from dCTP: step 1/1. With respect to regulation, inhibited by dTTP. Functionally, bifunctional enzyme that catalyzes both the deamination of dCTP to dUTP and the hydrolysis of dUTP to dUMP without releasing the toxic dUTP intermediate. The protein is dCTP deaminase, dUMP-forming of Halalkalibacterium halodurans (strain ATCC BAA-125 / DSM 18197 / FERM 7344 / JCM 9153 / C-125) (Bacillus halodurans).